The following is a 248-amino-acid chain: UPF0736 protein BcerKBAB4_1085 (248 aa).

Belongs to the UPF0736 family.

This Bacillus mycoides (strain KBAB4) (Bacillus weihenstephanensis) protein is UPF0736 protein BcerKBAB4_1085.